The following is a 113-amino-acid chain: U11-theraphotoxin-Hhn1a (113 aa).

An N-terminal signal peptide occupies residues 1-21; that stretch reads MNTVRVTFLLVFVLAVSLGQA. The propeptide occupies 22 to 74; the sequence is DKDENRMEMQKKTEQGKSYLDFAENLLLQKLEELEAKLLEEDSEESRNSRQKR. Cystine bridges form between C75/C90, C82/C95, and C89/C110.

This sequence belongs to the neurotoxin 14 (magi-1) family. 01 (HNTX-16) subfamily. As to expression, expressed by the venom gland.

The protein localises to the secreted. Probable ion channel inhibitor. The chain is U11-theraphotoxin-Hhn1a from Cyriopagopus hainanus (Chinese bird spider).